A 739-amino-acid polypeptide reads, in one-letter code: Polyphosphate kinase (739 aa).

Residues 22–45 (WHSDNSALAAPPAATTSASQDQLP) form a disordered region. Over residues 27 to 40 (SALAAPPAATTSAS) the composition is skewed to low complexity. Residue Asn87 participates in ATP binding. Mg(2+) contacts are provided by Arg428 and Arg458. The Phosphohistidine intermediate role is filled by His488. Residues Tyr521, Arg621, and His649 each coordinate ATP. Residues 714–739 (QWTASPQKGQQVRDHQESLMERHRSR) form a disordered region. A compositionally biased stretch (basic and acidic residues) spans 724 to 739 (QVRDHQESLMERHRSR).

It belongs to the polyphosphate kinase 1 (PPK1) family. The cofactor is Mg(2+). An intermediate of this reaction is the autophosphorylated ppk in which a phosphate is covalently linked to a histidine residue through a N-P bond.

It catalyses the reaction [phosphate](n) + ATP = [phosphate](n+1) + ADP. Its function is as follows. Catalyzes the reversible transfer of the terminal phosphate of ATP to form a long-chain polyphosphate (polyP). The protein is Polyphosphate kinase of Mycobacterium leprae (strain TN).